The following is a 250-amino-acid chain: 5-oxoprolinase subunit A (250 aa).

It belongs to the LamB/PxpA family. Forms a complex composed of PxpA, PxpB and PxpC.

It catalyses the reaction 5-oxo-L-proline + ATP + 2 H2O = L-glutamate + ADP + phosphate + H(+). Its function is as follows. Catalyzes the cleavage of 5-oxoproline to form L-glutamate coupled to the hydrolysis of ATP to ADP and inorganic phosphate. The protein is 5-oxoprolinase subunit A of Pseudomonas fluorescens (strain Pf0-1).